A 351-amino-acid polypeptide reads, in one-letter code: UDP-3-O-acylglucosamine N-acyltransferase (351 aa).

The active-site Proton acceptor is His-240.

This sequence belongs to the transferase hexapeptide repeat family. LpxD subfamily. Homotrimer.

The catalysed reaction is a UDP-3-O-[(3R)-3-hydroxyacyl]-alpha-D-glucosamine + a (3R)-hydroxyacyl-[ACP] = a UDP-2-N,3-O-bis[(3R)-3-hydroxyacyl]-alpha-D-glucosamine + holo-[ACP] + H(+). It functions in the pathway bacterial outer membrane biogenesis; LPS lipid A biosynthesis. Functionally, catalyzes the N-acylation of UDP-3-O-acylglucosamine using 3-hydroxyacyl-ACP as the acyl donor. Is involved in the biosynthesis of lipid A, a phosphorylated glycolipid that anchors the lipopolysaccharide to the outer membrane of the cell. This is UDP-3-O-acylglucosamine N-acyltransferase from Pseudomonas putida (strain ATCC 47054 / DSM 6125 / CFBP 8728 / NCIMB 11950 / KT2440).